A 299-amino-acid polypeptide reads, in one-letter code: Nicotinate-nucleotide pyrophosphorylase [carboxylating] (299 aa).

Residues 8 to 12 (FLLPP) form an important for hexamer formation region. Quinolinate is bound by residues arginine 102, 138-139 (RK), 160-161 (HR), lysine 171, glutamate 201, aspartate 222, 248-250 (SGG), and glycine 270.

It belongs to the NadC/ModD family. In terms of assembly, hexamer formed by 3 homodimers.

It carries out the reaction nicotinate beta-D-ribonucleotide + CO2 + diphosphate = quinolinate + 5-phospho-alpha-D-ribose 1-diphosphate + 2 H(+). The protein operates within cofactor biosynthesis; NAD(+) biosynthesis; nicotinate D-ribonucleotide from quinolinate: step 1/1. Involved in the catabolism of quinolinic acid (QA). This Rattus norvegicus (Rat) protein is Nicotinate-nucleotide pyrophosphorylase [carboxylating] (Qprt).